A 134-amino-acid chain; its full sequence is Small ribosomal subunit protein uS11 (134 aa).

Belongs to the universal ribosomal protein uS11 family. In terms of assembly, part of the 30S ribosomal subunit. Interacts with proteins S7 and S18. Binds to IF-3.

In terms of biological role, located on the platform of the 30S subunit, it bridges several disparate RNA helices of the 16S rRNA. Forms part of the Shine-Dalgarno cleft in the 70S ribosome. This Paracidovorax citrulli (strain AAC00-1) (Acidovorax citrulli) protein is Small ribosomal subunit protein uS11.